The sequence spans 122 residues: Large ribosomal subunit protein uL14 (122 aa).

It belongs to the universal ribosomal protein uL14 family. Part of the 50S ribosomal subunit. Forms a cluster with proteins L3 and L19. In the 70S ribosome, L14 and L19 interact and together make contacts with the 16S rRNA in bridges B5 and B8.

Its function is as follows. Binds to 23S rRNA. Forms part of two intersubunit bridges in the 70S ribosome. In Shewanella sediminis (strain HAW-EB3), this protein is Large ribosomal subunit protein uL14.